We begin with the raw amino-acid sequence, 266 residues long: Apolipoprotein A-I (266 aa).

A signal peptide spans Met-1–Ala-18. Tandem repeats lie at residues Leu-67 to Gly-88 and Pro-89 to Asn-110. The segment at Leu-67–Gln-266 is 10 X approximate tandem repeats. Met-109 carries the methionine sulfoxide modification. The stretch at Lys-111–Gln-121 is one 3; half-length repeat. Tandem repeats lie at residues Pro-122–Glu-143, Pro-144–Ser-165, Pro-166–Ala-187, Pro-188–Gly-209, and Ala-210–Lys-231. Residues Pro-232 to Leu-242 form a 9; half-length repeat. Copy 10 of the repeat occupies Pro-243–Gln-266.

The protein belongs to the apolipoprotein A1/A4/E family. In terms of assembly, homodimer. Interacts with APOA1BP and CLU. Component of a sperm activating protein complex (SPAP), consisting of APOA1, an immunoglobulin heavy chain, an immunoglobulin light chain and albumin. Interacts with NDRG1. Interacts with SCGB3A2. Interacts with NAXE and YJEFN3. Glycosylated. Post-translationally, palmitoylated. In terms of processing, phosphorylation sites are present in the extracellular medium. As to expression, major protein of plasma HDL, also found in chylomicrons.

The protein resides in the secreted. In terms of biological role, participates in the reverse transport of cholesterol from tissues to the liver for excretion by promoting cholesterol efflux from tissues and by acting as a cofactor for the lecithin cholesterol acyltransferase (LCAT). As part of the SPAP complex, activates spermatozoa motility. The chain is Apolipoprotein A-I (APOA1) from Carlito syrichta (Philippine tarsier).